The primary structure comprises 436 residues: Trigger factor (436 aa).

The PPIase FKBP-type domain maps to Glu161–Pro246.

The protein belongs to the FKBP-type PPIase family. Tig subfamily.

It localises to the cytoplasm. The catalysed reaction is [protein]-peptidylproline (omega=180) = [protein]-peptidylproline (omega=0). Involved in protein export. Acts as a chaperone by maintaining the newly synthesized protein in an open conformation. Functions as a peptidyl-prolyl cis-trans isomerase. The protein is Trigger factor of Pseudomonas syringae pv. syringae (strain B728a).